The following is a 305-amino-acid chain: Probable branched-chain-amino-acid aminotransferase (305 aa).

Lysine 156 carries the N6-(pyridoxal phosphate)lysine modification.

This sequence belongs to the class-IV pyridoxal-phosphate-dependent aminotransferase family. Pyridoxal 5'-phosphate serves as cofactor.

It catalyses the reaction L-leucine + 2-oxoglutarate = 4-methyl-2-oxopentanoate + L-glutamate. The catalysed reaction is L-isoleucine + 2-oxoglutarate = (S)-3-methyl-2-oxopentanoate + L-glutamate. The enzyme catalyses L-valine + 2-oxoglutarate = 3-methyl-2-oxobutanoate + L-glutamate. Its pathway is amino-acid biosynthesis; L-isoleucine biosynthesis; L-isoleucine from 2-oxobutanoate: step 4/4. It participates in amino-acid biosynthesis; L-leucine biosynthesis; L-leucine from 3-methyl-2-oxobutanoate: step 4/4. It functions in the pathway amino-acid biosynthesis; L-valine biosynthesis; L-valine from pyruvate: step 4/4. In terms of biological role, acts on leucine, isoleucine and valine. In Synechocystis sp. (strain ATCC 27184 / PCC 6803 / Kazusa), this protein is Probable branched-chain-amino-acid aminotransferase (ilvE).